Here is a 314-residue protein sequence, read N- to C-terminus: Putative 4-hydroxy-2-oxoglutarate aldolase, mitochondrial (314 aa).

A substrate-binding site is contributed by 50–51; sequence TN. Lysine 171 functions as the Schiff-base intermediate with substrate in the catalytic mechanism.

The protein belongs to the DapA family.

The enzyme catalyses (4S)-4-hydroxy-2-oxoglutarate = glyoxylate + pyruvate. It catalyses the reaction (4R)-4-hydroxy-2-oxoglutarate = glyoxylate + pyruvate. In terms of biological role, may catalyze the final step in the metabolic pathway of hydroxyproline. The polypeptide is Putative 4-hydroxy-2-oxoglutarate aldolase, mitochondrial (Coccidioides immitis (strain RS) (Valley fever fungus)).